The chain runs to 442 residues: Putative nucleotide-sugar transporter YMD8 (442 aa).

Topologically, residues 1-3 (MNR) are cytoplasmic. A helical transmembrane segment spans residues 4–24 (TVFLAFVFGWYFCSIALSIYN). Residues 25 to 32 (RWMFDPKD) are Extracellular-facing. A helical membrane pass occupies residues 33–53 (GLGIGYPVLVTTFHQATLWLL). Residues 54–76 (SGIYIKLRHKPVKNVLRKNNGFN) lie on the Cytoplasmic side of the membrane. A helical membrane pass occupies residues 77-97 (WSFFLKFLLPTAVASAGDIGL). Residues 98–107 (SNVSFQYVPL) are Extracellular-facing. A glycan (N-linked (GlcNAc...) asparagine) is linked at N99. A helical transmembrane segment spans residues 108 to 128 (TIYTIIKSSSIAFVLLFGCIF). Residues 129–132 (KLEK) are Cytoplasmic-facing. A helical membrane pass occupies residues 133-153 (FHWKLALSVIIMFVGVALMVF). Residues 154-166 (KPSDSTSTKNDQA) lie on the Extracellular side of the membrane. Residues 167–187 (LVIFGSFLVLASSCLSGLRWV) form a helical membrane-spanning segment. The Cytoplasmic portion of the chain corresponds to 188 to 254 (YTQLMLRNNP…PIHTIHQLAP (67 aa)). Residue S209 is modified to Phosphoserine. A helical transmembrane segment spans residues 255–275 (IMGITLLLTSLLVEKPFPGIF). At 276-301 (SSSIFRLDTSNGGVGTETTVLSIVRG) the chain is on the extracellular side. A helical membrane pass occupies residues 302–322 (IVLLILPGFAVFLLTICEFSI). The Cytoplasmic portion of the chain corresponds to 323–329 (LEQTPVL). The chain crosses the membrane as a helical span at residues 330-350 (TVSIVGIVKELLTVIFGIIIL). Topologically, residues 351–355 (SERLS) are extracellular. Residues 356–376 (GFYNWLGMLIIMADVCYYNYF) traverse the membrane as a helical segment. Over 377–442 (RYKQDLLQKY…QNVSRSSQQV (66 aa)) the chain is Cytoplasmic.

It belongs to the TPT transporter family. SLC35C subfamily.

The protein resides in the golgi apparatus membrane. Its subcellular location is the cytoplasmic vesicle. It localises to the COPI-coated vesicle membrane. The sequence is that of Putative nucleotide-sugar transporter YMD8 (YMD8) from Saccharomyces cerevisiae (strain ATCC 204508 / S288c) (Baker's yeast).